Consider the following 208-residue polypeptide: Small ribosomal subunit protein uS4 (208 aa).

A disordered region spans residues 24–52 (GVKPFDVKTKKANKAPGQHGQARGGKQSE). The 63-residue stretch at 98–160 (SRLDNVVYRM…AKQQLRIKNA (63 aa)) folds into the S4 RNA-binding domain.

Belongs to the universal ribosomal protein uS4 family. In terms of assembly, part of the 30S ribosomal subunit. Contacts protein S5. The interaction surface between S4 and S5 is involved in control of translational fidelity.

One of the primary rRNA binding proteins, it binds directly to 16S rRNA where it nucleates assembly of the body of the 30S subunit. Functionally, with S5 and S12 plays an important role in translational accuracy. The protein is Small ribosomal subunit protein uS4 of Acinetobacter baumannii (strain ACICU).